The sequence spans 245 residues: 14-3-3 protein zeta (245 aa).

It belongs to the 14-3-3 family. As to quaternary structure, homodimer. In terms of tissue distribution, present in all adult tissues examined with the highest levels in the brain.

The protein localises to the cytoplasm. Functionally, adapter protein implicated in the regulation of a large spectrum of both general and specialized signaling pathways. Binds to a large number of partners, usually by recognition of a phosphoserine or phosphothreonine motif. Binding generally results in the modulation of the activity of the binding partner. The sequence is that of 14-3-3 protein zeta (ywhaz) from Xenopus laevis (African clawed frog).